The chain runs to 446 residues: tRNA modification GTPase MnmE (446 aa).

(6S)-5-formyl-5,6,7,8-tetrahydrofolate-binding residues include Arg22, Glu80, and Lys119. The TrmE-type G domain maps to 215-370 (GLSLVIAGRP…LKKVIKQVVG (156 aa)). Residue Asn225 participates in K(+) binding. GTP-binding positions include 225-230 (NAGKST), 244-250 (TEIAGTT), and 269-272 (DTAG). Ser229 lines the Mg(2+) pocket. K(+) contacts are provided by Thr244, Ile246, and Thr249. Thr250 contacts Mg(2+). Lys446 lines the (6S)-5-formyl-5,6,7,8-tetrahydrofolate pocket.

Belongs to the TRAFAC class TrmE-Era-EngA-EngB-Septin-like GTPase superfamily. TrmE GTPase family. Homodimer. Heterotetramer of two MnmE and two MnmG subunits. The cofactor is K(+).

It localises to the cytoplasm. Functionally, exhibits a very high intrinsic GTPase hydrolysis rate. Involved in the addition of a carboxymethylaminomethyl (cmnm) group at the wobble position (U34) of certain tRNAs, forming tRNA-cmnm(5)s(2)U34. This chain is tRNA modification GTPase MnmE, found in Legionella pneumophila (strain Paris).